A 135-amino-acid chain; its full sequence is Putative hydrolase EbsB (135 aa).

The 128-residue stretch at 1–128 (MLRIYVDAAT…ADMLARQALQ (128 aa)) folds into the RNase H type-1 domain. Residues Asp7, Glu45, Asp71, and Asp120 each contribute to the Mg(2+) site.

Belongs to the RNase H family. EbsB subfamily. Mg(2+) serves as cofactor.

The protein resides in the secreted. It is found in the cell wall. Its function is as follows. Seems to play some role in the cell surface expression of a chromosomally encoded receptor, named enterococcal binding substance (EBS), that mediates mating aggregate formation. Might interfere with the synthesis or assembly of EBS and function as a cell wall hydrolase. The polypeptide is Putative hydrolase EbsB (Enterococcus faecalis (strain ATCC 700802 / V583)).